The following is a 119-amino-acid chain: Large ribosomal subunit protein uL22 (119 aa).

The protein belongs to the universal ribosomal protein uL22 family. As to quaternary structure, part of the 50S ribosomal subunit.

Functionally, this protein binds specifically to 23S rRNA; its binding is stimulated by other ribosomal proteins, e.g. L4, L17, and L20. It is important during the early stages of 50S assembly. It makes multiple contacts with different domains of the 23S rRNA in the assembled 50S subunit and ribosome. In terms of biological role, the globular domain of the protein is located near the polypeptide exit tunnel on the outside of the subunit, while an extended beta-hairpin is found that lines the wall of the exit tunnel in the center of the 70S ribosome. The protein is Large ribosomal subunit protein uL22 of Rickettsia typhi (strain ATCC VR-144 / Wilmington).